The primary structure comprises 602 residues: Elongation factor 4 (602 aa).

One can recognise a tr-type G domain in the interval 6 to 188 (DHIRNFSIVA…AIVNKLPAPK (183 aa)). Residues 18–23 (DHGKST) and 135–138 (NKID) contribute to the GTP site.

It belongs to the TRAFAC class translation factor GTPase superfamily. Classic translation factor GTPase family. LepA subfamily.

Its subcellular location is the cell inner membrane. The catalysed reaction is GTP + H2O = GDP + phosphate + H(+). In terms of biological role, required for accurate and efficient protein synthesis under certain stress conditions. May act as a fidelity factor of the translation reaction, by catalyzing a one-codon backward translocation of tRNAs on improperly translocated ribosomes. Back-translocation proceeds from a post-translocation (POST) complex to a pre-translocation (PRE) complex, thus giving elongation factor G a second chance to translocate the tRNAs correctly. Binds to ribosomes in a GTP-dependent manner. The sequence is that of Elongation factor 4 from Brucella suis (strain ATCC 23445 / NCTC 10510).